The chain runs to 356 residues: 1-deoxy-D-xylulose 5-phosphate reductoisomerase (356 aa).

Thr-7, Gly-8, Ser-9, Ile-10, Gly-31, Asn-33, and Asn-111 together coordinate NADPH. Lys-112 contacts 1-deoxy-D-xylulose 5-phosphate. Glu-113 contributes to the NADPH binding site. Asp-131 is a Mn(2+) binding site. 1-deoxy-D-xylulose 5-phosphate is bound by residues Ser-132, Glu-133, Ser-155, and His-178. Glu-133 is a Mn(2+) binding site. Position 184 (Gly-184) interacts with NADPH. 4 residues coordinate 1-deoxy-D-xylulose 5-phosphate: Ser-191, Asn-196, Lys-197, and Glu-200. Glu-200 contributes to the Mn(2+) binding site.

It belongs to the DXR family. Requires Mg(2+) as cofactor. The cofactor is Mn(2+).

The enzyme catalyses 2-C-methyl-D-erythritol 4-phosphate + NADP(+) = 1-deoxy-D-xylulose 5-phosphate + NADPH + H(+). The protein operates within isoprenoid biosynthesis; isopentenyl diphosphate biosynthesis via DXP pathway; isopentenyl diphosphate from 1-deoxy-D-xylulose 5-phosphate: step 1/6. Catalyzes the NADPH-dependent rearrangement and reduction of 1-deoxy-D-xylulose-5-phosphate (DXP) to 2-C-methyl-D-erythritol 4-phosphate (MEP). The chain is 1-deoxy-D-xylulose 5-phosphate reductoisomerase from Campylobacter jejuni subsp. jejuni serotype O:23/36 (strain 81-176).